The sequence spans 293 residues: Germ cell-specific gene 1-like protein 2 (293 aa).

Topologically, residues 1 to 8 (MDRAKQQQ) are cytoplasmic. A helical membrane pass occupies residues 9–29 (ALLLLPVCLALTFSLTAVVSS). Topologically, residues 30–120 (HWCEGTRRVV…RSVVPAEEQG (91 aa)) are extracellular. N59 and N67 each carry an N-linked (GlcNAc...) asparagine glycan. Residues 121-141 (VLWLSIGGEVLDIVLILTSAI) traverse the membrane as a helical segment. Residues 142-160 (LLGSRVSCRSPGFHWLRVD) lie on the Cytoplasmic side of the membrane. The chain crosses the membrane as a helical span at residues 161-181 (ALVAIFMVLAGLLGMVAHMMY). Residues 182–204 (TTIFQITVNLGPEDWKPQTWDYG) lie on the Extracellular side of the membrane. Residues 205 to 225 (WSYCLAWGSFALCLAVSVSAM) form a helical membrane-spanning segment. The Cytoplasmic portion of the chain corresponds to 226-293 (SRFTAARLEF…PGAPGKVSIC (68 aa)).

This sequence belongs to the GSG1 family.

The protein resides in the membrane. This Homo sapiens (Human) protein is Germ cell-specific gene 1-like protein 2.